Reading from the N-terminus, the 145-residue chain is Peptide methionine sulfoxide reductase MsrB (145 aa).

The MsrB domain occupies 4-127 (SDELKQRIGD…NSAALKFIPY (124 aa)). C116 acts as the Nucleophile in catalysis.

The protein belongs to the MsrB Met sulfoxide reductase family.

It carries out the reaction L-methionyl-[protein] + [thioredoxin]-disulfide + H2O = L-methionyl-(R)-S-oxide-[protein] + [thioredoxin]-dithiol. This Streptococcus pyogenes serotype M1 protein is Peptide methionine sulfoxide reductase MsrB.